A 328-amino-acid chain; its full sequence is Phosphate acyltransferase (328 aa).

This sequence belongs to the PlsX family. In terms of assembly, homodimer. Probably interacts with PlsY.

The protein resides in the cytoplasm. It catalyses the reaction a fatty acyl-[ACP] + phosphate = an acyl phosphate + holo-[ACP]. The protein operates within lipid metabolism; phospholipid metabolism. Catalyzes the reversible formation of acyl-phosphate (acyl-PO(4)) from acyl-[acyl-carrier-protein] (acyl-ACP). This enzyme utilizes acyl-ACP as fatty acyl donor, but not acyl-CoA. This is Phosphate acyltransferase from Pseudothermotoga lettingae (strain ATCC BAA-301 / DSM 14385 / NBRC 107922 / TMO) (Thermotoga lettingae).